The sequence spans 647 residues: Microtubule-associated protein 9 (647 aa).

Serine 2 is modified (N-acetylserine). A Phosphotyrosine modification is found at tyrosine 12. 6 disordered regions span residues 127–323 (KSFS…ELIM), 344–421 (SATA…PDRA), 491–514 (KRLEEKNKKKTEEENAARKGEALQ), 530–553 (KNRKEREYERAKKQKEEETVAEKK), 580–600 (NEKRKEELKRAEKKDKDKQAI), and 613–647 (QERIERKQKKRHSFLESEALPPWSPPSRTVFAKVF). A compositionally biased stretch (basic and acidic residues) spans 133–145 (QNKDEEFEKDKIK). Over residues 155–166 (IKSTSSAENNSL) the composition is skewed to polar residues. Positions 174 to 186 (PSPRPRSMLKKKS) are enriched in basic residues. A coiled-coil region spans residues 184 to 210 (KKSHMEEKDGLEDKETALSEELELHSA). Over residues 187 to 200 (HMEEKDGLEDKETA) the composition is skewed to basic and acidic residues. 2 stretches are compositionally biased toward polar residues: residues 210–219 (APSSLPTPNG) and 239–249 (CLTSLASSSLK). Over residues 268–287 (DPNEEITENHNSLKSDENKE) the composition is skewed to basic and acidic residues. Residues 298-328 (AVEKSKESQVTADDLEEEKAKAELIMDDDRT) adopt a coiled-coil conformation. Residues 365–374 (NNRASSASAR) show a composition bias toward low complexity. The stretch at 443–628 (MHRIKRIESE…KQKKRHSFLE (186 aa)) forms a coiled coil.

As to quaternary structure, binds to purified microtubules via its C-terminus.

Its subcellular location is the cytoplasm. It localises to the cytoskeleton. It is found in the spindle. Its function is as follows. Involved in organization of the bipolar mitotic spindle. Required for bipolar spindle assembly, mitosis progression and cytokinesis. May act by stabilizing interphase microtubules. This Homo sapiens (Human) protein is Microtubule-associated protein 9 (MAP9).